We begin with the raw amino-acid sequence, 191 residues long: uncharacterized protein (191 aa).

This is an uncharacterized protein from Arabidopsis thaliana (Mouse-ear cress).